The chain runs to 726 residues: Amino-acid acetyltransferase, mitochondrial (726 aa).

Polar residues predominate over residues 1 to 18; it reads MSSRTLVGLRSTTSTHLQ. The N-terminal 44 residues, 1–44, are a transit peptide targeting the mitochondrion; the sequence is MSSRTLVGLRSTTSTHLQRSGVAAAAAVSSSSTSSSGSAPRRCL. Residues 1–64 are disordered; that stretch reads MSSRTLVGLR…SAEFSSSSKS (64 aa). The span at 20 to 39 shows a compositional bias: low complexity; sequence SGVAAAAAVSSSSTSSSGSA. The segment covering 45–58 has biased composition (polar residues); the sequence is SSASGRQVQQSAEF. The N-acetyltransferase domain occupies 547-716; the sequence is DRPRLGLDDP…YEAVCRSIQP (170 aa).

It belongs to the acetyltransferase family.

The protein localises to the mitochondrion. It catalyses the reaction L-glutamate + acetyl-CoA = N-acetyl-L-glutamate + CoA + H(+). It participates in amino-acid biosynthesis; L-arginine biosynthesis; N(2)-acetyl-L-ornithine from L-glutamate: step 1/4. Functionally, N-acetylglutamate synthase involved in arginine biosynthesis. The protein is Amino-acid acetyltransferase, mitochondrial (arg2) of Aspergillus niger (strain ATCC MYA-4892 / CBS 513.88 / FGSC A1513).